The chain runs to 362 residues: Histidinol-phosphate aminotransferase (362 aa).

Lysine 219 carries the N6-(pyridoxal phosphate)lysine modification.

The protein belongs to the class-II pyridoxal-phosphate-dependent aminotransferase family. Histidinol-phosphate aminotransferase subfamily. As to quaternary structure, homodimer. Pyridoxal 5'-phosphate serves as cofactor.

The enzyme catalyses L-histidinol phosphate + 2-oxoglutarate = 3-(imidazol-4-yl)-2-oxopropyl phosphate + L-glutamate. It functions in the pathway amino-acid biosynthesis; L-histidine biosynthesis; L-histidine from 5-phospho-alpha-D-ribose 1-diphosphate: step 7/9. This is Histidinol-phosphate aminotransferase from Maricaulis maris (strain MCS10) (Caulobacter maris).